Reading from the N-terminus, the 664-residue chain is Translation factor GUF1, mitochondrial (664 aa).

The tr-type G domain maps to serine 63–glutamine 246. Residues alanine 72–serine 79, aspartate 139–histidine 143, and asparagine 193–aspartate 196 contribute to the GTP site.

Belongs to the TRAFAC class translation factor GTPase superfamily. Classic translation factor GTPase family. LepA subfamily.

It is found in the mitochondrion inner membrane. It carries out the reaction GTP + H2O = GDP + phosphate + H(+). Its function is as follows. Promotes mitochondrial protein synthesis. May act as a fidelity factor of the translation reaction, by catalyzing a one-codon backward translocation of tRNAs on improperly translocated ribosomes. Binds to mitochondrial ribosomes in a GTP-dependent manner. The polypeptide is Translation factor GUF1, mitochondrial (Clavispora lusitaniae (strain ATCC 42720) (Yeast)).